Reading from the N-terminus, the 233-residue chain is UPF0502 protein YPTS_2082 (233 aa).

It belongs to the UPF0502 family.

This Yersinia pseudotuberculosis serotype IB (strain PB1/+) protein is UPF0502 protein YPTS_2082.